The following is a 285-amino-acid chain: Pantothenate synthetase (285 aa).

30–37 (MGYLHEGH) is an ATP binding site. H37 acts as the Proton donor in catalysis. Residue Q61 participates in (R)-pantoate binding. A beta-alanine-binding site is contributed by Q61. 148–151 (GKKD) serves as a coordination point for ATP. (R)-pantoate is bound at residue Q154. ATP contacts are provided by residues V177 and 185-188 (LSSR).

The protein belongs to the pantothenate synthetase family. As to quaternary structure, homodimer.

The protein resides in the cytoplasm. The enzyme catalyses (R)-pantoate + beta-alanine + ATP = (R)-pantothenate + AMP + diphosphate + H(+). It functions in the pathway cofactor biosynthesis; (R)-pantothenate biosynthesis; (R)-pantothenate from (R)-pantoate and beta-alanine: step 1/1. Its function is as follows. Catalyzes the condensation of pantoate with beta-alanine in an ATP-dependent reaction via a pantoyl-adenylate intermediate. This chain is Pantothenate synthetase, found in Leptospira interrogans serogroup Icterohaemorrhagiae serovar Lai (strain 56601).